Reading from the N-terminus, the 365-residue chain is Histidinol-phosphate aminotransferase (365 aa).

The residue at position 227 (Lys227) is an N6-(pyridoxal phosphate)lysine.

This sequence belongs to the class-II pyridoxal-phosphate-dependent aminotransferase family. Histidinol-phosphate aminotransferase subfamily. In terms of assembly, homodimer. Pyridoxal 5'-phosphate is required as a cofactor.

The enzyme catalyses L-histidinol phosphate + 2-oxoglutarate = 3-(imidazol-4-yl)-2-oxopropyl phosphate + L-glutamate. It participates in amino-acid biosynthesis; L-histidine biosynthesis; L-histidine from 5-phospho-alpha-D-ribose 1-diphosphate: step 7/9. This Polaromonas naphthalenivorans (strain CJ2) protein is Histidinol-phosphate aminotransferase.